A 200-amino-acid polypeptide reads, in one-letter code: MAKFIQHIGLVAPLDAANVDTDAIIPKQFLQKVTRTGFGQHLFNDWRFLDDAGKVPNPDFVLNLPRYQGATILLARENFGCGSSREHAPWALTDFGFKVVIAPSFADIFYGNAFNNQLLPVTLSEADVDTLFQLVKENEGIEFVVDLEQQTVNAGGKSYAFEIDPFRRHCMINGLDSIGLTLQHEHNISAYEKQQPEFLR.

The protein belongs to the LeuD family. LeuD type 1 subfamily. In terms of assembly, heterodimer of LeuC and LeuD.

It carries out the reaction (2R,3S)-3-isopropylmalate = (2S)-2-isopropylmalate. It functions in the pathway amino-acid biosynthesis; L-leucine biosynthesis; L-leucine from 3-methyl-2-oxobutanoate: step 2/4. Functionally, catalyzes the isomerization between 2-isopropylmalate and 3-isopropylmalate, via the formation of 2-isopropylmaleate. The chain is 3-isopropylmalate dehydratase small subunit from Yersinia pseudotuberculosis serotype O:1b (strain IP 31758).